Here is a 191-residue protein sequence, read N- to C-terminus: Small ribosomal subunit protein uS5 (191 aa).

An S5 DRBM domain is found at 21–84 (LVDKLVTINR…ERAKRTMIRV (64 aa)). The tract at residues 161–191 (PRHVASRRGKKAAELFGKREQGQTEAEVTNG) is disordered. Basic and acidic residues predominate over residues 171 to 182 (KAAELFGKREQG).

This sequence belongs to the universal ribosomal protein uS5 family. In terms of assembly, part of the 30S ribosomal subunit. Contacts proteins S4 and S8.

Its function is as follows. With S4 and S12 plays an important role in translational accuracy. Functionally, located at the back of the 30S subunit body where it stabilizes the conformation of the head with respect to the body. In Gluconobacter oxydans (strain 621H) (Gluconobacter suboxydans), this protein is Small ribosomal subunit protein uS5.